A 293-amino-acid polypeptide reads, in one-letter code: Acetyl-coenzyme A carboxylase carboxyl transferase subunit beta (293 aa).

Residues 29-293 enclose the CoA carboxyltransferase N-terminal domain; the sequence is LWVKCSECSQ…GVKELAEANT (265 aa). Cysteine 33, cysteine 36, cysteine 52, and cysteine 55 together coordinate Zn(2+). The C4-type zinc-finger motif lies at 33 to 55; it reads CSECSQVAYRKDLISNFNVCSNC.

The protein belongs to the AccD/PCCB family. As to quaternary structure, acetyl-CoA carboxylase is a heterohexamer composed of biotin carboxyl carrier protein (AccB), biotin carboxylase (AccC) and two subunits each of ACCase subunit alpha (AccA) and ACCase subunit beta (AccD). It depends on Zn(2+) as a cofactor.

Its subcellular location is the cytoplasm. It carries out the reaction N(6)-carboxybiotinyl-L-lysyl-[protein] + acetyl-CoA = N(6)-biotinyl-L-lysyl-[protein] + malonyl-CoA. Its pathway is lipid metabolism; malonyl-CoA biosynthesis; malonyl-CoA from acetyl-CoA: step 1/1. Its function is as follows. Component of the acetyl coenzyme A carboxylase (ACC) complex. Biotin carboxylase (BC) catalyzes the carboxylation of biotin on its carrier protein (BCCP) and then the CO(2) group is transferred by the transcarboxylase to acetyl-CoA to form malonyl-CoA. In Prochlorococcus marinus (strain MIT 9301), this protein is Acetyl-coenzyme A carboxylase carboxyl transferase subunit beta.